The following is a 330-amino-acid chain: Aspartate--ammonia ligase (330 aa).

Belongs to the class-II aminoacyl-tRNA synthetase family. AsnA subfamily.

It is found in the cytoplasm. It catalyses the reaction L-aspartate + NH4(+) + ATP = L-asparagine + AMP + diphosphate + H(+). Its pathway is amino-acid biosynthesis; L-asparagine biosynthesis; L-asparagine from L-aspartate (ammonia route): step 1/1. The protein is Aspartate--ammonia ligase of Haemophilus influenzae (strain PittEE).